The primary structure comprises 244 residues: MSSQDVLIHSDDPCHPANLICTLCKQFFHNNWCTGTGGGISIKDPNTNYYYLAPSGVQKEKMTPEDLFVMDAQTLEYLRSPKLYKPSACTPLFLACYQKKDAGAIIHTHSQNAVICSLVFGDEFRIANIEQIKAIPSGKVDPVTKKPMALSFFDTLKIPIIENMAHEDELIDDLHKTFKDYPDTCAVIVRRHGIFVWGPTIDKAKIFNEAIDYLMELAIKMYQMGIPPDCGIGEEKKHLKMASP.

Cysteine 89 serves as a coordination point for substrate. Zn(2+) contacts are provided by histidine 107 and histidine 109. The Proton donor/acceptor role is filled by glutamate 130. Histidine 192 contacts Zn(2+).

It belongs to the aldolase class II family. MtnB subfamily. Requires Zn(2+) as cofactor.

It localises to the cytoplasm. It catalyses the reaction 5-(methylsulfanyl)-D-ribulose 1-phosphate = 5-methylsulfanyl-2,3-dioxopentyl phosphate + H2O. It participates in amino-acid biosynthesis; L-methionine biosynthesis via salvage pathway; L-methionine from S-methyl-5-thio-alpha-D-ribose 1-phosphate: step 2/6. Catalyzes the dehydration of methylthioribulose-1-phosphate (MTRu-1-P) into 2,3-diketo-5-methylthiopentyl-1-phosphate (DK-MTP-1-P). The sequence is that of Methylthioribulose-1-phosphate dehydratase from Saccharomyces cerevisiae (strain AWRI1631) (Baker's yeast).